The following is a 269-amino-acid chain: Xyloglucan endotransglucosylase/hydrolase protein 24 (269 aa).

An N-terminal signal peptide occupies residues 1-21 (MSPFKIFFFTTLLVAAFSVSA). Residues 22–212 (ADFNTDVNVA…WSKAPFMASY (191 aa)) form the GH16 domain. Glu-98 (nucleophile) is an active-site residue. Residue Glu-102 is the Proton donor of the active site. Glu-102 contributes to the xyloglucan binding site. Residue Asn-106 is glycosylated (N-linked (GlcNAc...) asparagine). Residues 115–117 (HTN), 125–127 (DKE), 191–192 (DW), Gly-196, and Arg-256 each bind xyloglucan. Residues Cys-251 and Cys-265 are joined by a disulfide bond.

Belongs to the glycosyl hydrolase 16 family. XTH group 2 subfamily. Contains at least one intrachain disulfide bond essential for its enzymatic activity. In terms of processing, N-glycosylated; essential for its enzymatic activity. In terms of tissue distribution, highly expressed. Predominantly expressed in stems. Expressed in shoot apical meristems, also found in seedlings and meristems.

It is found in the secreted. The protein localises to the cell wall. It localises to the extracellular space. The protein resides in the apoplast. It carries out the reaction breaks a beta-(1-&gt;4) bond in the backbone of a xyloglucan and transfers the xyloglucanyl segment on to O-4 of the non-reducing terminal glucose residue of an acceptor, which can be a xyloglucan or an oligosaccharide of xyloglucan.. Functionally, catalyzes xyloglucan endohydrolysis (XEH) and/or endotransglycosylation (XET). Cleaves and religates xyloglucan polymers, an essential constituent of the primary cell wall, and thereby participates in cell wall construction of growing tissues. May be required during development to modify the walls of cells under mechanical stress. The chain is Xyloglucan endotransglucosylase/hydrolase protein 24 (XTH24) from Arabidopsis thaliana (Mouse-ear cress).